The sequence spans 467 residues: ATP synthase subunit beta (467 aa).

Glycine 154–threonine 161 is a binding site for ATP.

It belongs to the ATPase alpha/beta chains family. As to quaternary structure, F-type ATPases have 2 components, CF(1) - the catalytic core - and CF(0) - the membrane proton channel. CF(1) has five subunits: alpha(3), beta(3), gamma(1), delta(1), epsilon(1). CF(0) has three main subunits: a(1), b(2) and c(9-12). The alpha and beta chains form an alternating ring which encloses part of the gamma chain. CF(1) is attached to CF(0) by a central stalk formed by the gamma and epsilon chains, while a peripheral stalk is formed by the delta and b chains.

It localises to the cell inner membrane. The catalysed reaction is ATP + H2O + 4 H(+)(in) = ADP + phosphate + 5 H(+)(out). In terms of biological role, produces ATP from ADP in the presence of a proton gradient across the membrane. The catalytic sites are hosted primarily by the beta subunits. The chain is ATP synthase subunit beta from Leptospira borgpetersenii serovar Hardjo-bovis (strain JB197).